The primary structure comprises 949 residues: Isoleucine--tRNA ligase (949 aa).

The 'HIGH' region signature appears at 58 to 68 (PYANGDIHIGH). Glutamate 567 contacts L-isoleucyl-5'-AMP. The short motif at 608–612 (KMSKS) is the 'KMSKS' region element. ATP is bound at residue lysine 611. Zn(2+) contacts are provided by cysteine 912, cysteine 915, cysteine 932, and cysteine 935.

It belongs to the class-I aminoacyl-tRNA synthetase family. IleS type 1 subfamily. As to quaternary structure, monomer. It depends on Zn(2+) as a cofactor.

It is found in the cytoplasm. The enzyme catalyses tRNA(Ile) + L-isoleucine + ATP = L-isoleucyl-tRNA(Ile) + AMP + diphosphate. Its function is as follows. Catalyzes the attachment of isoleucine to tRNA(Ile). As IleRS can inadvertently accommodate and process structurally similar amino acids such as valine, to avoid such errors it has two additional distinct tRNA(Ile)-dependent editing activities. One activity is designated as 'pretransfer' editing and involves the hydrolysis of activated Val-AMP. The other activity is designated 'posttransfer' editing and involves deacylation of mischarged Val-tRNA(Ile). The polypeptide is Isoleucine--tRNA ligase (Vibrio cholerae serotype O1 (strain ATCC 39541 / Classical Ogawa 395 / O395)).